We begin with the raw amino-acid sequence, 228 residues long: Carboxylesterase SOBER1 (228 aa).

Catalysis depends on charge relay system residues Ser-106, Asp-160, and His-192.

The protein belongs to the AB hydrolase superfamily. AB hydrolase 2 family.

Functionally, possesses carboxylesterase activity in vitro with a preference for short acyl chain substrates. Functions as a negative regulator of the hypersensitive response (HR) triggered by the bacterial type III effector protein AvrBsT. Possesses phospholipase A2 (PLA2) activity and hydrolyzes phosphatidylcholine (PC), a lipid that is hydrolyzed by phospholipase D (PLD) to produce phosphatidic acid (PA). Required to suppress AvrBsT-dependent HR and PLD-dependent production of PA in response to AvrBsT elicitation. The chain is Carboxylesterase SOBER1 from Arabidopsis thaliana (Mouse-ear cress).